The chain runs to 72 residues: Translation initiation factor IF-1 (72 aa).

Residues 1–72 (MSKEDMIEFS…SKGRITFRFK (72 aa)) enclose the S1-like domain.

Belongs to the IF-1 family. In terms of assembly, component of the 30S ribosomal translation pre-initiation complex which assembles on the 30S ribosome in the order IF-2 and IF-3, IF-1 and N-formylmethionyl-tRNA(fMet); mRNA recruitment can occur at any time during PIC assembly.

It localises to the cytoplasm. Its function is as follows. One of the essential components for the initiation of protein synthesis. Stabilizes the binding of IF-2 and IF-3 on the 30S subunit to which N-formylmethionyl-tRNA(fMet) subsequently binds. Helps modulate mRNA selection, yielding the 30S pre-initiation complex (PIC). Upon addition of the 50S ribosomal subunit IF-1, IF-2 and IF-3 are released leaving the mature 70S translation initiation complex. The chain is Translation initiation factor IF-1 from Gluconacetobacter diazotrophicus (strain ATCC 49037 / DSM 5601 / CCUG 37298 / CIP 103539 / LMG 7603 / PAl5).